Here is a 118-residue protein sequence, read N- to C-terminus: Small ribosomal subunit protein uS13 (118 aa).

Residues 91-118 are disordered; sequence HRRSLPVRGQRTKTNARTRKGPRKPIKA.

The protein belongs to the universal ribosomal protein uS13 family. In terms of assembly, part of the 30S ribosomal subunit. Forms a loose heterodimer with protein S19. Forms two bridges to the 50S subunit in the 70S ribosome.

In terms of biological role, located at the top of the head of the 30S subunit, it contacts several helices of the 16S rRNA. In the 70S ribosome it contacts the 23S rRNA (bridge B1a) and protein L5 of the 50S subunit (bridge B1b), connecting the 2 subunits; these bridges are implicated in subunit movement. Contacts the tRNAs in the A and P-sites. The sequence is that of Small ribosomal subunit protein uS13 from Francisella philomiragia subsp. philomiragia (strain ATCC 25017 / CCUG 19701 / FSC 153 / O#319-036).